The primary structure comprises 308 residues: Phenylcoumaran benzylic ether reductase 1 (308 aa).

Residues Gly11–Gly17, Arg36, and Arg45 contribute to the NADP(+) site. Lys133 functions as the Proton acceptor in the catalytic mechanism. Residue Arg137 coordinates NADP(+).

The protein belongs to the NmrA-type oxidoreductase family. Isoflavone reductase subfamily. Expressed in apical meristem and cotyledon veins of young seedlings. Expressed in vascular tissues of roots, leaves, stems and petals. Expressed in pollen grains. Expressed at low levels in cauline leaves and siliques.

It catalyses the reaction (-)-dehydrodiconiferyl alcohol + NADPH + H(+) = (S)-isodihydrodehydrodiconiferyl alcohol + NADP(+). It carries out the reaction (+)-dehydrodiconiferyl alcohol + NADPH + H(+) = (R)-isodihydrodehydrodiconiferyl alcohol + NADP(+). The catalysed reaction is (2R,3S)-dihydrodehydrodiconiferyl alcohol + NADPH + H(+) = (S)-tetrahydrodehydrodiconiferyl alcohol + NADP(+). The enzyme catalyses (2S,3R)-dihydrodehydrodiconiferyl alcohol + NADPH + H(+) = (R)-tetrahydrodehydrodiconiferyl alcohol + NADP(+). Oxidoreductase involved in lignan biosynthesis. Catalyzes the NADPH-dependent reduction of phenylcoumaran benzylic ethers. Converts dehydrodiconiferyl alcohol (DDC) to isodihydrodehydrodiconiferyl alcohol (IDDDC), and dihydrodehydrodiconiferyl alcohol (DDDC) to tetrahydrodehydrodiconiferyl alcohol (TDDC). Plays an important role in the biosynthesis of secondary metabolites. In addition to the 8-5'-linked neolignan DDC, can reduce the 8-8'-linked lignans, pinoresinol, and lariciresinol, but with lower activities. The chain is Phenylcoumaran benzylic ether reductase 1 from Arabidopsis thaliana (Mouse-ear cress).